Reading from the N-terminus, the 404-residue chain is Probable sugar efflux transporter (404 aa).

Transmembrane regions (helical) follow at residues 15 to 35 (VITF…PVAL), 51 to 71 (GLII…FMLL), 85 to 105 (LVLF…WVLV), 109 to 129 (IGVA…VIRV), 137 to 157 (QAIG…LPLG), 168 to 188 (ATFA…YQLL), 209 to 229 (PLLL…FTAY), 245 to 265 (SMAT…SLLF), 276 to 296 (FILF…IASQ), 299 to 319 (WTMF…GLGL), 333 to 353 (VAMA…ALLG), and 363 to 383 (AYIG…FILV).

Belongs to the major facilitator superfamily. SotB (TC 2.A.1.2) family.

Its subcellular location is the cell inner membrane. In terms of biological role, involved in the efflux of sugars. The physiological role may be the reduction of the intracellular concentration of toxic sugars or sugar metabolites. The chain is Probable sugar efflux transporter from Pasteurella multocida (strain Pm70).